A 201-amino-acid polypeptide reads, in one-letter code: Large ribosomal subunit protein uL4 (201 aa).

A disordered region spans residues 51-73; it reads EVTGSGKKPWRQKGTGRARAGSV.

It belongs to the universal ribosomal protein uL4 family. As to quaternary structure, part of the 50S ribosomal subunit.

Functionally, one of the primary rRNA binding proteins, this protein initially binds near the 5'-end of the 23S rRNA. It is important during the early stages of 50S assembly. It makes multiple contacts with different domains of the 23S rRNA in the assembled 50S subunit and ribosome. Its function is as follows. Forms part of the polypeptide exit tunnel. In Erwinia tasmaniensis (strain DSM 17950 / CFBP 7177 / CIP 109463 / NCPPB 4357 / Et1/99), this protein is Large ribosomal subunit protein uL4.